The following is a 126-amino-acid chain: MTSLEDSIKVEVKTEYIEGQSSPTEERYLFRYTITIVNLGEKAVTLKSRYWSITDANNHNSEVRGEGVVGETPTIEPDSAYQYTSGTVLETPLGVMQGSYTMITGEGESFKAQIPPFRLAVPGMLH.

The ApaG domain occupies 2–126 (TSLEDSIKVE…FRLAVPGMLH (125 aa)).

In Shewanella sediminis (strain HAW-EB3), this protein is Protein ApaG.